A 283-amino-acid polypeptide reads, in one-letter code: Protein/nucleic acid deglycase HchA (283 aa).

Zn(2+) contacts are provided by histidine 86, glutamate 91, and histidine 123. The active-site Nucleophile is the cysteine 185.

Belongs to the peptidase C56 family. HchA subfamily. In terms of assembly, homodimer.

It localises to the cytoplasm. The catalysed reaction is N(omega)-(1-hydroxy-2-oxopropyl)-L-arginyl-[protein] + H2O = lactate + L-arginyl-[protein] + H(+). It carries out the reaction N(6)-(1-hydroxy-2-oxopropyl)-L-lysyl-[protein] + H2O = lactate + L-lysyl-[protein] + H(+). It catalyses the reaction S-(1-hydroxy-2-oxopropyl)-L-cysteinyl-[protein] + H2O = lactate + L-cysteinyl-[protein] + H(+). The enzyme catalyses N(omega)-(1-hydroxy-2-oxoethyl)-L-arginyl-[protein] + H2O = L-arginyl-[protein] + glycolate + H(+). The catalysed reaction is N(6)-(1-hydroxy-2-oxoethyl)-L-lysyl-[protein] + H2O = glycolate + L-lysyl-[protein] + H(+). It carries out the reaction S-(1-hydroxy-2-oxoethyl)-L-cysteinyl-[protein] + H2O = glycolate + L-cysteinyl-[protein] + H(+). It catalyses the reaction N(2)-(1-hydroxy-2-oxopropyl)-dGTP + H2O = lactate + dGTP + H(+). The enzyme catalyses N(2)-(1-hydroxy-2-oxopropyl)-GTP + H2O = lactate + GTP + H(+). The catalysed reaction is N(2)-(1-hydroxy-2-oxopropyl)-GDP + H2O = lactate + GDP + H(+). It carries out the reaction N(2)-(1-hydroxy-2-oxopropyl)-GMP + H2O = lactate + GMP + H(+). It catalyses the reaction N(2)-(1-hydroxy-2-oxoethyl)-dGTP + H2O = dGTP + glycolate + H(+). The enzyme catalyses N(2)-(1-hydroxy-2-oxoethyl)-GTP + H2O = glycolate + GTP + H(+). The catalysed reaction is N(2)-(1-hydroxy-2-oxoethyl)-GDP + H2O = glycolate + GDP + H(+). It carries out the reaction N(2)-(1-hydroxy-2-oxoethyl)-GMP + H2O = glycolate + GMP + H(+). It catalyses the reaction an N(2)-(1-hydroxy-2-oxopropyl)-guanosine in RNA + H2O = a guanosine in RNA + lactate + H(+). The enzyme catalyses an N(2)-(1-hydroxy-2-oxopropyl)-2'-deoxyguanosine in DNA + H2O = a 2'-deoxyguanosine in DNA + lactate + H(+). The catalysed reaction is an N(2)-(1-hydroxy-2-oxoethyl)-guanosine in RNA + H2O = a guanosine in RNA + glycolate + H(+). It carries out the reaction an N(2)-(1-hydroxy-2-oxoethyl)-2'-deoxyguanosine in DNA + H2O = a 2'-deoxyguanosine in DNA + glycolate + H(+). Its function is as follows. Protein and nucleotide deglycase that catalyzes the deglycation of the Maillard adducts formed between amino groups of proteins or nucleotides and reactive carbonyl groups of glyoxals. Thus, functions as a protein deglycase that repairs methylglyoxal- and glyoxal-glycated proteins, and releases repaired proteins and lactate or glycolate, respectively. Deglycates cysteine, arginine and lysine residues in proteins, and thus reactivates these proteins by reversing glycation by glyoxals. Acts on early glycation intermediates (hemithioacetals and aminocarbinols), preventing the formation of Schiff bases and advanced glycation endproducts (AGE). Also functions as a nucleotide deglycase able to repair glycated guanine in the free nucleotide pool (GTP, GDP, GMP, dGTP) and in DNA and RNA. Is thus involved in a major nucleotide repair system named guanine glycation repair (GG repair), dedicated to reversing methylglyoxal and glyoxal damage via nucleotide sanitization and direct nucleic acid repair. Plays an important role in protecting cells from carbonyl stress. In Shigella sonnei (strain Ss046), this protein is Protein/nucleic acid deglycase HchA.